A 301-amino-acid chain; its full sequence is Protoheme IX farnesyltransferase (301 aa).

9 helical membrane passes run 20–42 (FTELVKIGIVNSNTITAFTGMWL), 55–75 (VDVIFFTIVGSALIVAASGAF), 105–125 (ALMVALVLGVVGTIMLFMTTW), 126–146 (QAGVLGVIGVFLYVVVYSLYA), 150–172 (LVSNTVIGSFSGAVPPLIGWFAV), 176–198 (FSIVPIMLFLVMFCWQPPHFYAI), 227–247 (MFFWVILLTVLPFFMFDLGLV), 249–269 (VILATLLNIGWLALSIYGFKM), and 280–300 (FVYSLNYMTILFVAMVVISIF).

This sequence belongs to the UbiA prenyltransferase family. Protoheme IX farnesyltransferase subfamily. As to quaternary structure, interacts with CtaA.

It is found in the cell membrane. The catalysed reaction is heme b + (2E,6E)-farnesyl diphosphate + H2O = Fe(II)-heme o + diphosphate. Its pathway is porphyrin-containing compound metabolism; heme O biosynthesis; heme O from protoheme: step 1/1. Its function is as follows. Converts heme B (protoheme IX) to heme O by substitution of the vinyl group on carbon 2 of heme B porphyrin ring with a hydroxyethyl farnesyl side group. The polypeptide is Protoheme IX farnesyltransferase (Listeria innocua serovar 6a (strain ATCC BAA-680 / CLIP 11262)).